A 635-amino-acid chain; its full sequence is Glutamine sensor PIB2 (635 aa).

Residues 1 to 110 (MTALHSVSKT…GTGFVDRKQQ (110 aa)) form a disordered region. The segment at 1–164 (MTALHSVSKT…KTLPFTDDQR (164 aa)) is may play a role in attenuating TORC1 signaling. A compositionally biased stretch (basic and acidic residues) spans 33 to 44 (RNHDYRGRKGDE). S46 and S53 each carry phosphoserine. T56 bears the Phosphothreonine mark. Residues 67–85 (STHSEQSILSSISLKSMVN) show a composition bias toward polar residues. Phosphoserine is present on residues S73, S113, S124, S148, S165, and S174. 2 disordered regions span residues 123-181 (NSAE…VSRG) and 224-254 (SSNL…TSKV). A compositionally biased stretch (low complexity) spans 238 to 254 (SSSSSTSSVSSSSTSKV). Phosphoserine is present on residues S300, S309, and S381. Residues 304–440 (LPQPASSTNL…PTISNRNSAR (137 aa)) form a required for interaction with TORC1 region. The FYVE-type; atypical zinc-finger motif lies at 452–527 (DSKRNSCRYC…ICDDCLVEYE (76 aa)). Zn(2+)-binding residues include C458, C461, C474, C477, C482, H485, C519, and C522. Disordered stretches follow at residues 534–557 (HNAN…DNRK) and 570–623 (ALFR…GSVI). Composition is skewed to acidic residues over residues 543-553 (INVEEGEDDDN) and 601-616 (EEAD…EEGN). The segment at 620-635 (GSVIGSVPANWNWSSF) is may be required for TORC1 activation.

In terms of assembly, interacts with the TORC1 complex when activated by glutamine or cysteine. Interacts with TOR1; glutamine enhances the interaction. Interacts with KOG1; glutamine enhances the interaction. Interacts with TCO89. Interacts with LST8; glutamine enhances the interaction. Interacts with TOR2; glutamine enhances the interaction.

The protein resides in the vacuole membrane. Activated by glutamine. May also be activated by cysteine. In terms of biological role, functions as an intracellular glutamine sensor that directly activates the TORC1 signaling pathway, to promote cell growth when glutamine is available. May play a role in repressing NPR1 activity independently of TORC1 signaling. This is Glutamine sensor PIB2 from Saccharomyces cerevisiae (strain ATCC 204508 / S288c) (Baker's yeast).